Consider the following 225-residue polypeptide: Orotate phosphoribosyltransferase (225 aa).

Residues arginine 107, lysine 108, lysine 111, and glutamate 133–serine 141 contribute to the 5-phospho-alpha-D-ribose 1-diphosphate site. Threonine 137 lines the orotate pocket.

The protein belongs to the purine/pyrimidine phosphoribosyltransferase family. PyrE subfamily. Homodimer. The cofactor is Mg(2+).

It catalyses the reaction orotidine 5'-phosphate + diphosphate = orotate + 5-phospho-alpha-D-ribose 1-diphosphate. The protein operates within pyrimidine metabolism; UMP biosynthesis via de novo pathway; UMP from orotate: step 1/2. In terms of biological role, catalyzes the transfer of a ribosyl phosphate group from 5-phosphoribose 1-diphosphate to orotate, leading to the formation of orotidine monophosphate (OMP). In Roseobacter denitrificans (strain ATCC 33942 / OCh 114) (Erythrobacter sp. (strain OCh 114)), this protein is Orotate phosphoribosyltransferase.